The primary structure comprises 570 residues: Dihydroxy-acid dehydratase 2 (570 aa).

Cysteine 51 provides a ligand contact to [2Fe-2S] cluster. Mg(2+) is bound at residue aspartate 83. Cysteine 124 is a binding site for [2Fe-2S] cluster. Mg(2+)-binding residues include aspartate 125 and lysine 126. An N6-carboxylysine modification is found at lysine 126. Cysteine 196 provides a ligand contact to [2Fe-2S] cluster. Position 446 (glutamate 446) interacts with Mg(2+). The active-site Proton acceptor is the serine 472.

It belongs to the IlvD/Edd family. In terms of assembly, homodimer. The cofactor is [2Fe-2S] cluster. It depends on Mg(2+) as a cofactor.

The catalysed reaction is (2R)-2,3-dihydroxy-3-methylbutanoate = 3-methyl-2-oxobutanoate + H2O. It carries out the reaction (2R,3R)-2,3-dihydroxy-3-methylpentanoate = (S)-3-methyl-2-oxopentanoate + H2O. Its pathway is amino-acid biosynthesis; L-isoleucine biosynthesis; L-isoleucine from 2-oxobutanoate: step 3/4. The protein operates within amino-acid biosynthesis; L-valine biosynthesis; L-valine from pyruvate: step 3/4. Its function is as follows. Functions in the biosynthesis of branched-chain amino acids. Catalyzes the dehydration of (2R,3R)-2,3-dihydroxy-3-methylpentanoate (2,3-dihydroxy-3-methylvalerate) into 2-oxo-3-methylpentanoate (2-oxo-3-methylvalerate) and of (2R)-2,3-dihydroxy-3-methylbutanoate (2,3-dihydroxyisovalerate) into 2-oxo-3-methylbutanoate (2-oxoisovalerate), the penultimate precursor to L-isoleucine and L-valine, respectively. In Bordetella bronchiseptica (strain ATCC BAA-588 / NCTC 13252 / RB50) (Alcaligenes bronchisepticus), this protein is Dihydroxy-acid dehydratase 2.